The chain runs to 432 residues: Aspartate aminotransferase (432 aa).

45–46 (RG) lines the substrate pocket. 109-111 (SSL) lines the pyridoxal 5'-phosphate pocket. 148 to 150 (YDR) contributes to the substrate binding site. Pyridoxal 5'-phosphate contacts are provided by residues Asn-197, Tyr-229, and 262 to 265 (STSK). Arg-400 contributes to the substrate binding site.

This sequence belongs to the class-I pyridoxal-phosphate-dependent aminotransferase family. Homodimer. Pyridoxal 5'-phosphate is required as a cofactor.

It carries out the reaction L-aspartate + 2-oxoglutarate = oxaloacetate + L-glutamate. The sequence is that of Aspartate aminotransferase from Corynebacterium glutamicum (strain ATCC 13032 / DSM 20300 / JCM 1318 / BCRC 11384 / CCUG 27702 / LMG 3730 / NBRC 12168 / NCIMB 10025 / NRRL B-2784 / 534).